A 447-amino-acid chain; its full sequence is Probable glycine dehydrogenase (decarboxylating) subunit 1 (447 aa).

The protein belongs to the GcvP family. N-terminal subunit subfamily. The glycine cleavage system is composed of four proteins: P, T, L and H. In this organism, the P 'protein' is a heterodimer of two subunits.

It carries out the reaction N(6)-[(R)-lipoyl]-L-lysyl-[glycine-cleavage complex H protein] + glycine + H(+) = N(6)-[(R)-S(8)-aminomethyldihydrolipoyl]-L-lysyl-[glycine-cleavage complex H protein] + CO2. Its function is as follows. The glycine cleavage system catalyzes the degradation of glycine. The P protein binds the alpha-amino group of glycine through its pyridoxal phosphate cofactor; CO(2) is released and the remaining methylamine moiety is then transferred to the lipoamide cofactor of the H protein. The sequence is that of Probable glycine dehydrogenase (decarboxylating) subunit 1 from Azorhizobium caulinodans (strain ATCC 43989 / DSM 5975 / JCM 20966 / LMG 6465 / NBRC 14845 / NCIMB 13405 / ORS 571).